The chain runs to 326 residues: uncharacterized protein (326 aa).

3 Solcar repeats span residues 15–106, 114–215, and 234–322; these read EFLV…VRRV, ETHA…ATDF, and LKTW…SKAL. 6 consecutive transmembrane segments (helical) span residues 16 to 36, 83 to 103, 120 to 140, 191 to 211, 240 to 260, and 294 to 314; these read FLVK…SVVA, TATL…YEQV, FLSG…LELI, FSVT…AYDL, LLCG…FEVC, and FFVG…TSFF.

Belongs to the mitochondrial carrier (TC 2.A.29) family.

It is found in the mitochondrion inner membrane. This is an uncharacterized protein from Schizosaccharomyces pombe (strain 972 / ATCC 24843) (Fission yeast).